We begin with the raw amino-acid sequence, 1010 residues long: Signal peptide, CUB and EGF-like domain-containing protein 2 (1010 aa).

The first 24 residues, Met-1–Ala-24, serve as a signal peptide directing secretion. Positions Asn-28–Glu-68 constitute an EGF-like 1; calcium-binding domain. Intrachain disulfides connect Cys-32–Cys-45, Cys-39–Cys-54, Cys-56–Cys-67, Cys-73–Cys-85, Cys-81–Cys-94, Cys-96–Cys-109, Cys-115–Cys-126, and Cys-122–Cys-135. The 42-residue stretch at Asp-69–Leu-110 folds into the EGF-like 2; calcium-binding domain. The EGF-like 3; calcium-binding domain occupies Asp-111 to Gln-147. EGF-like domains are found at residues Cys-160–Cys-196 and Cys-200–Cys-235. Asn-249 is a glycosylation site (N-linked (GlcNAc...) asparagine). In terms of domain architecture, EGF-like 6 spans Cys-269–Cys-304. One can recognise an EGF-like 7; calcium-binding domain in the interval Asp-306–Gln-346. Disulfide bonds link Cys-310–Cys-321, Cys-317–Cys-330, Cys-332–Cys-345, Cys-351–Cys-361, Cys-357–Cys-370, Cys-372–Cys-384, Cys-390–Cys-401, Cys-397–Cys-410, and Cys-412–Cys-425. Residues Asp-347–Gly-385 form the EGF-like 8; calcium-binding domain. The 41-residue stretch at Asp-386–Ile-426 folds into the EGF-like 9; calcium-binding domain. N-linked (GlcNAc...) asparagine glycosylation is found at Asn-488, Asn-703, Asn-774, and Asn-803. A disulfide bridge links Cys-822 with Cys-848. The CUB domain occupies Cys-822–Tyr-934. The segment at Ile-860–Leu-869 is interaction with the cholesterol-anchor of SHH. Cysteines 875 and 896 form a disulfide. An N-linked (GlcNAc...) asparagine glycan is attached at Asn-982.

In terms of assembly, interacts with SHH via the cholesterol anchor of the dually lipid-modified SHH (ShhNp). Interacts with PTCH1. Forms homooligomers and heterooligomers with SCUBE1 and SCUBE3. Interacts with VEGFR2. In terms of processing, N-glycosylated.

Its subcellular location is the secreted. It localises to the cell surface. Functionally, lipid-binding protein required for SHH long-range signaling by binding to the dually lipid-modified SHH (ShhNp) and by promoting ShhNp mobilization, solubilization and release from the cell membrane. Acts by enhancing the proteolytic processing (shedding) of the lipid-modified N- and C- terminal of ShhNp at the cell surface. Synergizes with DISP1 to cause an increase in SHH secretion. Probable cell surface coreceptor for VEGFR2 involved in VEGFR2-mediated angiogenesis. The sequence is that of Signal peptide, CUB and EGF-like domain-containing protein 2 (scube2) from Danio rerio (Zebrafish).